Here is a 149-residue protein sequence, read N- to C-terminus: 3-dehydroquinate dehydratase (149 aa).

Residue Tyr26 is the Proton acceptor of the active site. Positions 77, 83, and 90 each coordinate substrate. The Proton donor role is filled by His103. Residues 104-105 and Arg114 each bind substrate; that span reads LS.

Belongs to the type-II 3-dehydroquinase family. In terms of assembly, homododecamer.

The enzyme catalyses 3-dehydroquinate = 3-dehydroshikimate + H2O. Its pathway is metabolic intermediate biosynthesis; chorismate biosynthesis; chorismate from D-erythrose 4-phosphate and phosphoenolpyruvate: step 3/7. Functionally, catalyzes a trans-dehydration via an enolate intermediate. This is 3-dehydroquinate dehydratase from Aliivibrio salmonicida (strain LFI1238) (Vibrio salmonicida (strain LFI1238)).